Consider the following 227-residue polypeptide: Thymidine kinase 1 (227 aa).

ATP contacts are provided by residues 15 to 22, 47 to 49, and 91 to 94; these read GPMFSGKT, DTR, and DEGQ. E92 functions as the Proton acceptor in the catalytic mechanism. A substrate-binding site is contributed by F122. Residues C147 and C150 each coordinate Zn(2+). Substrate-binding positions include 166–170 and Y175; that span reads IELIG. Zn(2+) contacts are provided by C179 and C182. Positions 187–196 are enriched in polar residues; that stretch reads QNEGNSTKPS. The segment at 187–227 is disordered; the sequence is QNEGNSTKPSKTARHSHSQSAPSVAPLAVNINPDDHLNNDY.

This sequence belongs to the thymidine kinase family. In terms of assembly, interacts with calmodulin in the presence of Ca(2+).

The catalysed reaction is thymidine + ATP = dTMP + ADP + H(+). This Dictyostelium discoideum (Social amoeba) protein is Thymidine kinase 1.